Consider the following 127-residue polypeptide: Ribosome-binding factor A (127 aa).

It belongs to the RbfA family. In terms of assembly, monomer. Binds 30S ribosomal subunits, but not 50S ribosomal subunits or 70S ribosomes.

It localises to the cytoplasm. Functionally, one of several proteins that assist in the late maturation steps of the functional core of the 30S ribosomal subunit. Associates with free 30S ribosomal subunits (but not with 30S subunits that are part of 70S ribosomes or polysomes). Required for efficient processing of 16S rRNA. May interact with the 5'-terminal helix region of 16S rRNA. In Geobacillus kaustophilus (strain HTA426), this protein is Ribosome-binding factor A.